We begin with the raw amino-acid sequence, 158 residues long: NADH-quinone oxidoreductase subunit B (158 aa).

C36, C37, C101, and C131 together coordinate [4Fe-4S] cluster.

The protein belongs to the complex I 20 kDa subunit family. In terms of assembly, NDH-1 is composed of 14 different subunits. Subunits NuoB, C, D, E, F, and G constitute the peripheral sector of the complex. It depends on [4Fe-4S] cluster as a cofactor.

It localises to the cell inner membrane. The enzyme catalyses a quinone + NADH + 5 H(+)(in) = a quinol + NAD(+) + 4 H(+)(out). In terms of biological role, NDH-1 shuttles electrons from NADH, via FMN and iron-sulfur (Fe-S) centers, to quinones in the respiratory chain. The immediate electron acceptor for the enzyme in this species is believed to be ubiquinone. Couples the redox reaction to proton translocation (for every two electrons transferred, four hydrogen ions are translocated across the cytoplasmic membrane), and thus conserves the redox energy in a proton gradient. In Francisella philomiragia subsp. philomiragia (strain ATCC 25017 / CCUG 19701 / FSC 153 / O#319-036), this protein is NADH-quinone oxidoreductase subunit B.